Reading from the N-terminus, the 124-residue chain is MARLVGVDLPRDKRIEIALTYIYGIGRTRAQQVLEATGVNPDLRVHQLGDEELVKLRDEIEANFKIEGDLRREVQADIRRKIEIGSYQGRRHRQGLPVRGQRTKTNARTRKGPKRTVAGKKKAK.

The interval 89-124 is disordered; the sequence is GRRHRQGLPVRGQRTKTNARTRKGPKRTVAGKKKAK. Residues 101 to 124 are compositionally biased toward basic residues; the sequence is QRTKTNARTRKGPKRTVAGKKKAK.

The protein belongs to the universal ribosomal protein uS13 family. As to quaternary structure, part of the 30S ribosomal subunit. Forms a loose heterodimer with protein S19. Forms two bridges to the 50S subunit in the 70S ribosome.

Its function is as follows. Located at the top of the head of the 30S subunit, it contacts several helices of the 16S rRNA. In the 70S ribosome it contacts the 23S rRNA (bridge B1a) and protein L5 of the 50S subunit (bridge B1b), connecting the 2 subunits; these bridges are implicated in subunit movement. Contacts the tRNAs in the A and P-sites. This Nocardioides sp. (strain ATCC BAA-499 / JS614) protein is Small ribosomal subunit protein uS13.